Here is a 268-residue protein sequence, read N- to C-terminus: Hydroxyethylthiazole kinase (268 aa).

Met-49 is a binding site for substrate. The ATP site is built by Lys-124 and Thr-168. Residue Ala-195 participates in substrate binding.

The protein belongs to the Thz kinase family. Mg(2+) is required as a cofactor.

It carries out the reaction 5-(2-hydroxyethyl)-4-methylthiazole + ATP = 4-methyl-5-(2-phosphooxyethyl)-thiazole + ADP + H(+). The protein operates within cofactor biosynthesis; thiamine diphosphate biosynthesis; 4-methyl-5-(2-phosphoethyl)-thiazole from 5-(2-hydroxyethyl)-4-methylthiazole: step 1/1. Functionally, catalyzes the phosphorylation of the hydroxyl group of 4-methyl-5-beta-hydroxyethylthiazole (THZ). In Archaeoglobus fulgidus (strain ATCC 49558 / DSM 4304 / JCM 9628 / NBRC 100126 / VC-16), this protein is Hydroxyethylthiazole kinase.